Reading from the N-terminus, the 242-residue chain is Sugar fermentation stimulation protein homolog (242 aa).

The protein belongs to the SfsA family.

The chain is Sugar fermentation stimulation protein homolog from Enterococcus mundtii.